A 559-amino-acid polypeptide reads, in one-letter code: MPSIKSDIEIARAAAKKPIFEIGAQLGIPVEQLAPYGHDKAKVSAEFIAAQAGRKDGKLILVTAINPTPAGEGKTTTTVGLGDGLNRIGKKAIICIREASLGPCFGVKGGAAGGGYAQVVPMEDINLHFTGDFHAITSAHNLLAAMIDNHIYWGNEENIDIRRIAWRRVMDMNDRALRSMVSSLGGVANGFPRQGGFDITVASEVMAILCLATDLKDLERRLGDIIIGYRFDKTPVHARDLKADGAMAVLLKDAMQPNLVQTLENNPAFVHGGPFANIAHGCNSVTATKTALKLGDYVVTEAGFGADLGAEKFFDIKCRKAGLRPDAAVIVATVRALKMNGGVKKEDLGTEDVAALKKGCANLGRHVANVRRFGVPVVVAINHFVSDTDAEIAAVKEFVSRLGAEAILCQHWAKGSAGIEELAHKVVELAESGQAKFHPLYGDDLSLFEKIEIIASKIYHAGEVTADKAVRDQLQSWEEQGYGKLPVCMAKTQYSFSTDPNLRGAPEGHIVSVREVRLSAGAGFVVAITGEIMTMPGLPKSPSAERIFLNDQGYIEGLF.

Position 68 to 75 (68 to 75 (TPAGEGKT)) interacts with ATP.

It belongs to the formate--tetrahydrofolate ligase family.

The catalysed reaction is (6S)-5,6,7,8-tetrahydrofolate + formate + ATP = (6R)-10-formyltetrahydrofolate + ADP + phosphate. It functions in the pathway one-carbon metabolism; tetrahydrofolate interconversion. This is Formate--tetrahydrofolate ligase from Rhizobium etli (strain CIAT 652).